Consider the following 526-residue polypeptide: MPSIKRALISLSDKTGAVEFAQTLTKLGVEILSTGGTAKLLADAGVPVIEVADYTGFPEMLDGRVKTLHPKIHGGILGRRDLDEHVAKMEEHGIGNIDLVCVNLYPFAATIAKPNCTLEDAIENIDIGGPTMVRSAAKNWKHVAIVTDTADFPAIAAELEANNGALSDKTRFNLSRKAFSHTAQYDGMISNYLTSLSDDVLSGEPEIGEFPSQFNQSWIKVQDMRYGENPHQRAAFYRDIDPAAGSLSAYKQLQGKELSYNNIADADAAWEAVKSFDAPACVIVKHANPCGVAVAADTLTAYKLAYVTDTTSAFGGIIAFNREVDGETVKQITDNQFMEVLMAPKFTAEALEIAAAKKNVRVLEVPLEAGANRFELKRVGGGLLVQTPDIHRLNRADLKVVSKRQPTEQEWNDLMFVWNVAKYVKSNAIVFGKGGQTYGIGAGQMSRVDSTRIAARKAQDANLDLNGACAASDAFFPFRDGVDVIAEQGIKAIIHPAGSMRDQEVFDAADEHGIAMVVTDVRHFRH.

One can recognise an MGS-like domain in the interval 1–147 (MPSIKRALIS…KNWKHVAIVT (147 aa)).

Belongs to the PurH family.

It catalyses the reaction (6R)-10-formyltetrahydrofolate + 5-amino-1-(5-phospho-beta-D-ribosyl)imidazole-4-carboxamide = 5-formamido-1-(5-phospho-D-ribosyl)imidazole-4-carboxamide + (6S)-5,6,7,8-tetrahydrofolate. It carries out the reaction IMP + H2O = 5-formamido-1-(5-phospho-D-ribosyl)imidazole-4-carboxamide. It participates in purine metabolism; IMP biosynthesis via de novo pathway; 5-formamido-1-(5-phospho-D-ribosyl)imidazole-4-carboxamide from 5-amino-1-(5-phospho-D-ribosyl)imidazole-4-carboxamide (10-formyl THF route): step 1/1. The protein operates within purine metabolism; IMP biosynthesis via de novo pathway; IMP from 5-formamido-1-(5-phospho-D-ribosyl)imidazole-4-carboxamide: step 1/1. The sequence is that of Bifunctional purine biosynthesis protein PurH from Neisseria meningitidis serogroup C / serotype 2a (strain ATCC 700532 / DSM 15464 / FAM18).